A 2196-amino-acid chain; its full sequence is Genome polyprotein (2196 aa).

G2 carries N-myristoyl glycine; by host lipidation. Residues 2–1506 (GAQVSTQKTG…HVSRAFICLQ (1505 aa)) are Cytoplasmic-facing. The amphipathic alpha-helix stretch occupies residues 568 to 584 (DLQGDSEHAVESAVSRV). Residues H883 and D901 each act as for protease 2A activity in the active site. Zn(2+) is bound by residues C918 and C920. C972 serves as the catalytic For protease 2A activity. Zn(2+) contacts are provided by C978 and H980. The tract at residues 1112–1184 (NNGWLKKFTE…EQSAPSQSDQ (73 aa)) is membrane-binding. The oligomerization stretch occupies residues 1112–1250 (NNGWLKKFTE…SPGAGKSVAT (139 aa)). The interval 1133–1137 (AIKIQ) is RNA-binding. The 157-residue stretch at 1216–1372 (EKKMSNYIQF…SMYSQNGKIN (157 aa)) folds into the SF3 helicase domain. 3 residues coordinate Zn(2+): C1380, C1392, and C1397. The C4-type; degenerate zinc finger occupies 1380–1397 (CDEECCPVNFKKCCPLVC). An RNA-binding region spans residues 1424–1431 (EYNHRHSV). The oligomerization stretch occupies residues 1435-1440 (LEALFQ). An intramembrane segment occupies 1507–1522 (ALTTFVSVAGIIYIIY). Residues 1523-2196 (KLFAGFQGAY…TLRRKWLDSF (674 aa)) are Cytoplasmic-facing. Y1532 carries the O-(5'-phospho-RNA)-tyrosine modification. Positions 1552 to 1730 (GPAFEFAVAM…FSAALLKHYF (179 aa)) constitute a Peptidase C3 domain. Catalysis depends on for protease 3C activity residues H1591, E1622, and C1698. The region spanning 1961 to 2077 (GHLIAFDYSG…SYPWPIDASL (117 aa)) is the RdRp catalytic domain. D1967 and D2063 together coordinate Mg(2+).

It belongs to the picornaviruses polyprotein family. In terms of assembly, interacts with capsid protein VP1 and capsid protein VP3 to form heterotrimeric protomers. As to quaternary structure, interacts with capsid protein VP0, and capsid protein VP3 to form heterotrimeric protomers. Five protomers subsequently associate to form pentamers which serve as building blocks for the capsid. Interacts with capsid protein VP2, capsid protein VP3 and capsid protein VP4 following cleavage of capsid protein VP0. Interacts with capsid protein VP1 and capsid protein VP3 in the mature capsid. In terms of assembly, interacts with capsid protein VP0 and capsid protein VP1 to form heterotrimeric protomers. Five protomers subsequently associate to form pentamers which serve as building blocks for the capsid. Interacts with capsid protein VP4 in the mature capsid. Interacts with protein 2C; this interaction may be important for virion morphogenesis. As to quaternary structure, interacts with capsid protein VP1 and capsid protein VP3. Homodimer. In terms of assembly, homohexamer; forms a hexameric ring structure with 6-fold symmetry characteristic of AAA+ ATPases. Interacts (via N-terminus) with host RTN3 (via reticulon domain); this interaction is important for viral replication. Interacts with capsid protein VP3; this interaction may be important for virion morphogenesis. As to quaternary structure, interacts with protein 3CD. Homodimer. Interacts with host GBF1. Interacts (via GOLD domain) with host ACBD3 (via GOLD domain); this interaction allows the formation of a viral protein 3A/ACBD3 heterotetramer with a 2:2 stoichiometry, which will stimulate the recruitment of host PI4KB in order to synthesize PI4P at the viral RNA replication sites. In terms of assembly, interacts with RNA-directed RNA polymerase. As to quaternary structure, interacts with protein 3AB and with RNA-directed RNA polymerase. Interacts with Viral protein genome-linked and with protein 3CD. It depends on Mg(2+) as a cofactor. Specific enzymatic cleavages in vivo by the viral proteases yield processing intermediates and the mature proteins. Post-translationally, myristoylation is required for the formation of pentamers during virus assembly. Further assembly of 12 pentamers and a molecule of genomic RNA generates the provirion. In terms of processing, during virion maturation, immature virions are rendered infectious following cleavage of VP0 into VP4 and VP2. This maturation seems to be an autocatalytic event triggered by the presence of RNA in the capsid and it is followed by a conformational change infectious virion. Myristoylation is required during RNA encapsidation and formation of the mature virus particle. Post-translationally, VPg is uridylylated by the polymerase into VPg-pUpU. This acts as a nucleotide-peptide primer for the genomic RNA replication.

The protein localises to the virion. It localises to the host cytoplasm. Its subcellular location is the host cytoplasmic vesicle membrane. It is found in the host nucleus. It catalyses the reaction a ribonucleoside 5'-triphosphate + H2O = a ribonucleoside 5'-diphosphate + phosphate + H(+). It carries out the reaction Selective cleavage of Tyr-|-Gly bond in the picornavirus polyprotein.. The enzyme catalyses RNA(n) + a ribonucleoside 5'-triphosphate = RNA(n+1) + diphosphate. The catalysed reaction is Selective cleavage of Gln-|-Gly bond in the poliovirus polyprotein. In other picornavirus reactions Glu may be substituted for Gln, and Ser or Thr for Gly.. Its activity is regulated as follows. Replication or transcription is subject to high level of random mutations by the nucleotide analog ribavirin. Its function is as follows. Forms an icosahedral capsid of pseudo T=3 symmetry with capsid proteins VP2 and VP3. The capsid is 300 Angstroms in diameter, composed of 60 copies of each capsid protein and enclosing the viral positive strand RNA genome. Capsid protein VP1 mainly forms the vertices of the capsid. Capsid protein VP1 interacts with host cell receptor to provide virion attachment to target host cells. This attachment induces virion internalization. Tyrosine kinases are probably involved in the entry process. After binding to its receptor, the capsid undergoes conformational changes. Capsid protein VP1 N-terminus (that contains an amphipathic alpha-helix) and capsid protein VP4 are externalized. Together, they shape a pore in the host membrane through which viral genome is translocated to host cell cytoplasm. Functionally, forms an icosahedral capsid of pseudo T=3 symmetry with capsid proteins VP2 and VP3. The capsid is 300 Angstroms in diameter, composed of 60 copies of each capsid protein and enclosing the viral positive strand RNA genome. Lies on the inner surface of the capsid shell. After binding to the host receptor, the capsid undergoes conformational changes. Capsid protein VP4 is released, Capsid protein VP1 N-terminus is externalized, and together, they shape a pore in the host membrane through which the viral genome is translocated into the host cell cytoplasm. In terms of biological role, component of immature procapsids, which is cleaved into capsid proteins VP4 and VP2 after maturation. Allows the capsid to remain inactive before the maturation step. Its function is as follows. Cysteine protease that cleaves viral polyprotein and specific host proteins. It is responsible for the autocatalytic cleavage between the P1 and P2 regions, which is the first cleavage occurring in the polyprotein. Also cleaves the host translation initiation factor EIF4G1, in order to shut down the capped cellular mRNA translation. Inhibits the host nucleus-cytoplasm protein and RNA trafficking by cleaving host members of the nuclear pores. Counteracts stress granule formation probably by antagonizing its assembly or promoting its dissassembly. Functionally, plays an essential role in the virus replication cycle by acting as a viroporin. Creates a pore in the host endoplasmic reticulum and as a consequence releases Ca2+ in the cytoplasm of infected cell. In turn, high levels of cytoplasmic calcium may trigger membrane trafficking and transport of viral ER-associated proteins to viroplasms, sites of viral genome replication. Induces and associates with structural rearrangements of intracellular membranes. Displays RNA-binding, nucleotide binding and NTPase activities. May play a role in virion morphogenesis and viral RNA encapsidation by interacting with the capsid protein VP3. In terms of biological role, localizes the viral replication complex to the surface of membranous vesicles. Together with protein 3CD binds the Cis-Active RNA Element (CRE) which is involved in RNA synthesis initiation. Acts as a cofactor to stimulate the activity of 3D polymerase, maybe through a nucleid acid chaperone activity. Its function is as follows. Localizes the viral replication complex to the surface of membranous vesicles. It inhibits host cell endoplasmic reticulum-to-Golgi apparatus transport and causes the disassembly of the Golgi complex, possibly through GBF1 interaction. This would result in depletion of MHC, trail receptors and IFN receptors at the host cell surface. Plays an essential role in viral RNA replication by recruiting ACBD3 and PI4KB at the viral replication sites, thereby allowing the formation of the rearranged membranous structures where viral replication takes place. Functionally, acts as a primer for viral RNA replication and remains covalently bound to viral genomic RNA. VPg is uridylylated prior to priming replication into VPg-pUpU. The oriI viral genomic sequence may act as a template for this. The VPg-pUpU is then used as primer on the genomic RNA poly(A) by the RNA-dependent RNA polymerase to replicate the viral genome. During genome replication, the VPg-RNA linkage is removed by the host TDP2, thereby accelerating replication. During the late stage of the replication cycle, host TDP2 is excluded from sites of viral RNA synthesis and encapsidation, allowing for the generation of progeny virions. Involved in the viral replication complex and viral polypeptide maturation. It exhibits protease activity with a specificity and catalytic efficiency that is different from protease 3C. Protein 3CD lacks polymerase activity. Protein 3CD binds to the 5'UTR of the viral genome. In terms of biological role, replicates the viral genomic RNA on the surface of intracellular membranes. May form linear arrays of subunits that propagate along a strong head-to-tail interaction called interface-I. Covalently attaches UMP to a tyrosine of VPg, which is used to prime RNA synthesis. The positive stranded RNA genome is first replicated at virus induced membranous vesicles, creating a dsRNA genomic replication form. This dsRNA is then used as template to synthesize positive stranded RNA genomes. ss(+)RNA genomes are either translated, replicated or encapsidated. Its function is as follows. Major viral protease that mediates proteolytic processing of the polyprotein. Cleaves host EIF5B, contributing to host translation shutoff. Also cleaves host PABPC1, contributing to host translation shutoff. Cleaves host NLRP1, triggers host N-glycine-mediated degradation of the autoinhibitory NLRP1 N-terminal fragment. The sequence is that of Genome polyprotein from Homo sapiens (Human).